The following is a 396-amino-acid chain: Initiation-specific alpha-1,6-mannosyltransferase (396 aa).

Residues 1–7 are Cytoplasmic-facing; that stretch reads MLRLRLR. Residues 8–28 form a helical; Signal-anchor for type II membrane protein membrane-spanning segment; that stretch reads SIVIGAAIAGSILLLFNHGSI. Topologically, residues 29–396 are lumenal; sequence EGMEDLTEIS…HFFAGSWKDD (368 aa). The DXD motif motif lies at 229–231; sequence DID. Asparagine 345 carries an N-linked (GlcNAc...) asparagine glycan.

Belongs to the glycosyltransferase 32 family. It depends on Mn(2+) as a cofactor.

The protein resides in the endoplasmic reticulum membrane. Its subcellular location is the golgi apparatus membrane. The enzyme catalyses Transfers an alpha-D-mannosyl residue from GDP-mannose into lipid-linked oligosaccharide, forming an alpha-(1-&gt;6)-D-mannosyl-D-mannose linkage.. Functionally, mannosyltransferase involved in outer chain elongation of asparagine-linked oligosaccharides of the type Man(9)GlcNAc(2). May otherwise add the first alpha-1,6-mannose to the Man(8)GlcNAc(2) core oligosaccharide from the ER. Represents the first enzymatic event required for synthesis of outer chain mannose linkages on yeast secretory proteins. In Schizosaccharomyces pombe (strain 972 / ATCC 24843) (Fission yeast), this protein is Initiation-specific alpha-1,6-mannosyltransferase.